The primary structure comprises 139 residues: Peptide methionine sulfoxide reductase MsrB (139 aa).

Positions 9–131 constitute a MsrB domain; it reads TPSDNTEMTE…NSASLSFIDD (123 aa). 4 residues coordinate Zn(2+): Cys-48, Cys-51, Cys-97, and Cys-100. The active-site Nucleophile is Cys-120.

This sequence belongs to the MsrB Met sulfoxide reductase family. Zn(2+) is required as a cofactor.

The enzyme catalyses L-methionyl-[protein] + [thioredoxin]-disulfide + H2O = L-methionyl-(R)-S-oxide-[protein] + [thioredoxin]-dithiol. The protein is Peptide methionine sulfoxide reductase MsrB of Pectobacterium atrosepticum (strain SCRI 1043 / ATCC BAA-672) (Erwinia carotovora subsp. atroseptica).